The following is a 386-amino-acid chain: S-adenosylmethionine synthase (386 aa).

Residue H16 participates in ATP binding. Residue D18 participates in Mg(2+) binding. E44 provides a ligand contact to K(+). Residues E57 and Q100 each contribute to the L-methionine site. A flexible loop region spans residues 100–110; that stretch reads QSPDINVGVDQ. ATP-binding positions include 164–166, 231–232, D240, 246–247, A263, and K267; these read DGK, RF, and RK. Residue D240 coordinates L-methionine. K271 lines the L-methionine pocket.

The protein belongs to the AdoMet synthase family. In terms of assembly, homotetramer; dimer of dimers. Mg(2+) serves as cofactor. The cofactor is K(+).

The protein localises to the cytoplasm. The enzyme catalyses L-methionine + ATP + H2O = S-adenosyl-L-methionine + phosphate + diphosphate. It functions in the pathway amino-acid biosynthesis; S-adenosyl-L-methionine biosynthesis; S-adenosyl-L-methionine from L-methionine: step 1/1. In terms of biological role, catalyzes the formation of S-adenosylmethionine (AdoMet) from methionine and ATP. The overall synthetic reaction is composed of two sequential steps, AdoMet formation and the subsequent tripolyphosphate hydrolysis which occurs prior to release of AdoMet from the enzyme. The polypeptide is S-adenosylmethionine synthase (Sulfurovum sp. (strain NBC37-1)).